Here is a 409-residue protein sequence, read N- to C-terminus: Serine/threonine transporter SstT (409 aa).

A run of 9 helical transmembrane segments spans residues 17-37, 49-69, 83-103, 142-162, 180-200, 218-238, 301-321, 331-351, and 357-377; these read LVGQIIVGLIAGLLLASFFPA, FVSALKAVAPVLVFVLVMASI, ILLLYLVGTFSAAVVAVIASF, ALISANFIGILAWAIGLGIAF, VSLIVKVVIRFAPLGIFGLVA, LVVLLGCMLFVAFVVNPLIVF, GAAITITVLTLAAVHTLGIAV, VVASICACGASGVAGGSLLLI, and LFGIPSEVAMQVVAVGFIIAI.

It belongs to the dicarboxylate/amino acid:cation symporter (DAACS) (TC 2.A.23) family.

The protein resides in the cell inner membrane. It catalyses the reaction L-serine(in) + Na(+)(in) = L-serine(out) + Na(+)(out). The enzyme catalyses L-threonine(in) + Na(+)(in) = L-threonine(out) + Na(+)(out). In terms of biological role, involved in the import of serine and threonine into the cell, with the concomitant import of sodium (symport system). The protein is Serine/threonine transporter SstT of Pseudomonas aeruginosa (strain LESB58).